The primary structure comprises 211 residues: Large ribosomal subunit protein uL3 (211 aa).

An N5-methylglutamine modification is found at Gln151.

The protein belongs to the universal ribosomal protein uL3 family. As to quaternary structure, part of the 50S ribosomal subunit. Forms a cluster with proteins L14 and L19. In terms of processing, methylated by PrmB.

In terms of biological role, one of the primary rRNA binding proteins, it binds directly near the 3'-end of the 23S rRNA, where it nucleates assembly of the 50S subunit. The polypeptide is Large ribosomal subunit protein uL3 (Francisella tularensis subsp. tularensis (strain FSC 198)).